The primary structure comprises 101 residues: ATP synthase subunit c (101 aa).

2 helical membrane-spanning segments follow: residues 31–51 and 81–101; these read AFAYLGAGLAMIGVIGVGAGQ and AISETSSIYALLVALILIFVG.

It belongs to the ATPase C chain family. As to quaternary structure, F-type ATPases have 2 components, F(1) - the catalytic core - and F(0) - the membrane proton channel. F(1) has five subunits: alpha(3), beta(3), gamma(1), delta(1), epsilon(1). F(0) has three main subunits: a(1), b(2) and c(10-14). The alpha and beta chains form an alternating ring which encloses part of the gamma chain. F(1) is attached to F(0) by a central stalk formed by the gamma and epsilon chains, while a peripheral stalk is formed by the delta and b chains.

The protein resides in the cell membrane. In terms of biological role, f(1)F(0) ATP synthase produces ATP from ADP in the presence of a proton or sodium gradient. F-type ATPases consist of two structural domains, F(1) containing the extramembraneous catalytic core and F(0) containing the membrane proton channel, linked together by a central stalk and a peripheral stalk. During catalysis, ATP synthesis in the catalytic domain of F(1) is coupled via a rotary mechanism of the central stalk subunits to proton translocation. Its function is as follows. Key component of the F(0) channel; it plays a direct role in translocation across the membrane. A homomeric c-ring of between 10-14 subunits forms the central stalk rotor element with the F(1) delta and epsilon subunits. In Mesomycoplasma hyopneumoniae (strain J / ATCC 25934 / NCTC 10110) (Mycoplasma hyopneumoniae), this protein is ATP synthase subunit c.